Consider the following 151-residue polypeptide: 3-dehydroquinate dehydratase (151 aa).

Catalysis depends on Tyr-24, which acts as the Proton acceptor. Residues Asn-76, His-82, and Asp-89 each contribute to the substrate site. The Proton donor role is filled by His-102. Residues 103-104 (VS) and Arg-113 each bind substrate.

The protein belongs to the type-II 3-dehydroquinase family. As to quaternary structure, homododecamer.

It catalyses the reaction 3-dehydroquinate = 3-dehydroshikimate + H2O. It functions in the pathway metabolic intermediate biosynthesis; chorismate biosynthesis; chorismate from D-erythrose 4-phosphate and phosphoenolpyruvate: step 3/7. Its function is as follows. Catalyzes a trans-dehydration via an enolate intermediate. This Afipia carboxidovorans (strain ATCC 49405 / DSM 1227 / KCTC 32145 / OM5) (Oligotropha carboxidovorans) protein is 3-dehydroquinate dehydratase.